We begin with the raw amino-acid sequence, 311 residues long: Coproporphyrin III ferrochelatase 1 (311 aa).

Fe-coproporphyrin III-binding positions include tyrosine 12, arginine 29, 45–46 (RY), serine 53, and tyrosine 124. Histidine 182 and glutamate 263 together coordinate Fe(2+).

This sequence belongs to the ferrochelatase family.

The protein localises to the cytoplasm. It carries out the reaction Fe-coproporphyrin III + 2 H(+) = coproporphyrin III + Fe(2+). It participates in porphyrin-containing compound metabolism; protoheme biosynthesis. Functionally, involved in coproporphyrin-dependent heme b biosynthesis. Catalyzes the insertion of ferrous iron into coproporphyrin III to form Fe-coproporphyrin III. In Bacillus cereus (strain ZK / E33L), this protein is Coproporphyrin III ferrochelatase 1.